Reading from the N-terminus, the 108-residue chain is LBH domain-containing protein 2 (108 aa).

A compositionally biased stretch (pro residues) spans 1-11 (MSTPRPAPPQP). The disordered stretch occupies residues 1-108 (MSTPRPAPPQ…SEDPAAPARG (108 aa)). Residues 37–62 (QRLPSIVVEPSEADPVESGELRWPLE) enclose the LBH domain. Residues 63–85 (SAQRGPSQSRAAAAPSPSLPGEP) show a composition bias toward low complexity.

The protein is LBH domain-containing protein 2 of Homo sapiens (Human).